A 113-amino-acid polypeptide reads, in one-letter code: UPF0122 protein SSU98_0878 (113 aa).

It belongs to the UPF0122 family.

Its function is as follows. Might take part in the signal recognition particle (SRP) pathway. This is inferred from the conservation of its genetic proximity to ftsY/ffh. May be a regulatory protein. In Streptococcus suis (strain 98HAH33), this protein is UPF0122 protein SSU98_0878.